Consider the following 950-residue polypeptide: MCNHHPRHSHDNDTIRIRGARTHNLKNIDLDIPRHKLVVVTGLSGSGKSSLAFDTLYAEGQRRYVESLSAYARQFLQMMDKPDVDLIEGLSPAISIEQKSTSHNPRSTVGTVTEIHDYLRLLYARVGTPYCPEHNLSLSSQTVSQMVDAVLKLPEDTRVMILGPAVRERKGEFVDFFADLQAQGFARVRVDGEVYQLDEVPKLEKNIKHNIDVVIDRVKVKADIKQRLAESFETALRHGNERALAMEMDSGEEHWFSARFACPVCSYSLPELEPRLFSFNNPMGSCPTCDGLGNTNFFDPEKVVAHPELSLATGAIDGWDKRNQFYFQMIQSLAHHYKFDVNVAWETLPEKVKKVVLHGSGKEVIDFTYLSERGTTFNRSHAFEGIIPNLERRYRETDSETVREKLREYQNHRACPSCGGARLRKEARYVYVGGEPLHEVSAWPLTKTHRFFETLDLDGNKKQIAEKILKEITERLGFLINVGLDYLNLSRSAETLSGGEAQRIRLASQIGSGLTGVMYVLDEPSIGLHQRDNDRLLATLKRLRDLGNSVIVVEHDEDAIREADFVVDMGPGAGEHGGNVLIADTPENVAKCEKSVTGQYLGGKKSIAVPSERTPVNPGRMLVLKGARGNNLKNVTLELPLGLITCITGVSGSGKSTLINDTLAKITARELNRAQEEPAPYDDIRGLEHLDKVINVDQSPIGRTPRSNPATYTGLFTPIRELFAGVPLSRERGYNVGRFSFNVKGGRCEACQGDGVIKVEMHFLPDVYVPCEVCHGKRYNRETLEIQYKGKNISQVLDMTVEEAREFFDAVPTVSRKLQTLMDVGLGYIRLGQSATTLSGGEAQRVKLALELSKRDTGRTLYILDEPTTGLHFADIALLLEVIGRLKGKGNSIVIIEHNLDVIKTADWIVDLGPEGGDGGGKVIAKGSPEQVAKIKGSYTGKYLKVALNK.

ATP is bound at residue 42 to 49; it reads GLSGSGKS. The C4-type zinc-finger motif lies at 262-289; sequence CPVCSYSLPELEPRLFSFNNPMGSCPTC. 2 consecutive ABC transporter domains span residues 319 to 596 and 616 to 945; these read WDKR…EKSV and VNPG…KYLK. 649–656 contributes to the ATP binding site; it reads GVSGSGKS. Residues 748 to 774 form a C4-type zinc finger; it reads CEACQGDGVIKVEMHFLPDVYVPCEVC.

The protein belongs to the ABC transporter superfamily. UvrA family. Forms a heterotetramer with UvrB during the search for lesions.

It localises to the cytoplasm. In terms of biological role, the UvrABC repair system catalyzes the recognition and processing of DNA lesions. UvrA is an ATPase and a DNA-binding protein. A damage recognition complex composed of 2 UvrA and 2 UvrB subunits scans DNA for abnormalities. When the presence of a lesion has been verified by UvrB, the UvrA molecules dissociate. The chain is UvrABC system protein A from Neisseria gonorrhoeae.